A 378-amino-acid polypeptide reads, in one-letter code: Transmembrane protein adipocyte-associated 1 homolog (378 aa).

Asn-16, Asn-25, and Asn-36 each carry an N-linked (GlcNAc...) asparagine glycan. 7 consecutive transmembrane segments (helical) span residues 61 to 81 (VMLL…LPSA), 88 to 108 (TSSP…AVGI), 136 to 156 (FFLL…GHLE), 164 to 184 (VLAI…TLEI), 205 to 225 (HFWL…VILP), 247 to 267 (ILAL…ADII), and 278 to 298 (FLYF…GFFG). Residues 316–335 (DSDVHLPHTSSSGLGRKDLD) are disordered.

This sequence belongs to the UPF0359 family.

The protein localises to the membrane. The sequence is that of Transmembrane protein adipocyte-associated 1 homolog (tpra1) from Danio rerio (Zebrafish).